The chain runs to 137 residues: ATP synthase epsilon chain (137 aa).

The protein belongs to the ATPase epsilon chain family. F-type ATPases have 2 components, CF(1) - the catalytic core - and CF(0) - the membrane proton channel. CF(1) has five subunits: alpha(3), beta(3), gamma(1), delta(1), epsilon(1). CF(0) has three main subunits: a, b and c.

The protein localises to the cellular thylakoid membrane. Produces ATP from ADP in the presence of a proton gradient across the membrane. The polypeptide is ATP synthase epsilon chain (Synechococcus sp. (strain JA-2-3B'a(2-13)) (Cyanobacteria bacterium Yellowstone B-Prime)).